The chain runs to 330 residues: Class III chitinase ARB_03514 (330 aa).

The N-terminal stretch at 1-22 is a signal peptide; that stretch reads MSSVKNILSFVALFAGVKTAYA. Residues 23-314 enclose the GH18 domain; sequence GLNSPGHNNV…SAVKGALSAG (292 aa). N-linked (GlcNAc...) asparagine glycosylation is found at Asn61 and Asn135. Catalysis depends on Glu155, which acts as the Proton donor. N-linked (GlcNAc...) asparagine glycosylation is found at Asn278 and Asn302.

The protein belongs to the glycosyl hydrolase 18 family. Chitinase class III subfamily. As to quaternary structure, monomer.

It is found in the secreted. The catalysed reaction is Random endo-hydrolysis of N-acetyl-beta-D-glucosaminide (1-&gt;4)-beta-linkages in chitin and chitodextrins.. Its function is as follows. Secreted chitinase involved in the degradation of chitin, a component of the cell walls of fungi and exoskeletal elements of some animals (including worms and arthropods). Plays a morphogenetic role during apical growth, cell division and differentiation (cell wall morphogenesis). The protein is Class III chitinase ARB_03514 of Arthroderma benhamiae (strain ATCC MYA-4681 / CBS 112371) (Trichophyton mentagrophytes).